A 366-amino-acid chain; its full sequence is Short-chain collagen C4 (366 aa).

The span at 1 to 14 shows a compositional bias: low complexity; that stretch reads DTGPQGPQGVAGPP. Triple-helical region regions lie at residues 1 to 23 and 40 to 210; these read DTGP…KGDK and GPPG…NGAV. The disordered stretch occupies residues 1–207; sequence DTGPQGPQGV…QGPQGAPGSN (207 aa). The span at 28 to 45 shows a compositional bias: pro residues; the sequence is YPPPPTCPTCPAGPPGAP. 2 stretches are compositionally biased toward low complexity: residues 75 to 90 and 99 to 110; these read PGND…PGYD and TGAPGPQGPKGD. Residues 138–149 are compositionally biased toward basic and acidic residues; that stretch reads DGQDGAKGDKGD. 2 stretches are compositionally biased toward low complexity: residues 150–168 and 189–201; these read QGPA…QGPA and QGPK…QGPQ.

It localises to the secreted. The protein localises to the extracellular space. It is found in the extracellular matrix. This Ephydatia muelleri (Mueller's freshwater sponge) protein is Short-chain collagen C4.